Reading from the N-terminus, the 989-residue chain is Bifunctional glutamine synthetase adenylyltransferase/adenylyl-removing enzyme (989 aa).

The adenylyl removase stretch occupies residues 1–474 (MNSSAIDADI…HYGKLFEGDP (474 aa)). Residues 480-989 (LPIDYAGGPD…FNRLIGGDSA (510 aa)) are adenylyl transferase.

Belongs to the GlnE family. Mg(2+) serves as cofactor.

It carries out the reaction [glutamine synthetase]-O(4)-(5'-adenylyl)-L-tyrosine + phosphate = [glutamine synthetase]-L-tyrosine + ADP. The catalysed reaction is [glutamine synthetase]-L-tyrosine + ATP = [glutamine synthetase]-O(4)-(5'-adenylyl)-L-tyrosine + diphosphate. Its function is as follows. Involved in the regulation of glutamine synthetase GlnA, a key enzyme in the process to assimilate ammonia. When cellular nitrogen levels are high, the C-terminal adenylyl transferase (AT) inactivates GlnA by covalent transfer of an adenylyl group from ATP to specific tyrosine residue of GlnA, thus reducing its activity. Conversely, when nitrogen levels are low, the N-terminal adenylyl removase (AR) activates GlnA by removing the adenylyl group by phosphorolysis, increasing its activity. The regulatory region of GlnE binds the signal transduction protein PII (GlnB) which indicates the nitrogen status of the cell. The sequence is that of Bifunctional glutamine synthetase adenylyltransferase/adenylyl-removing enzyme from Rhodopseudomonas palustris (strain BisB5).